The primary structure comprises 287 residues: Large ribosomal subunit protein uL2 (287 aa).

2 disordered regions span residues 25-57 (TKTE…RGGG) and 203-287 (LSAG…GRES). 2 stretches are compositionally biased toward basic residues: residues 209–220 (GRNRWKGRRPKV) and 259–287 (TRNR…GRES).

Belongs to the universal ribosomal protein uL2 family. As to quaternary structure, part of the 50S ribosomal subunit. Forms a bridge to the 30S subunit in the 70S ribosome.

In terms of biological role, one of the primary rRNA binding proteins. Required for association of the 30S and 50S subunits to form the 70S ribosome, for tRNA binding and peptide bond formation. It has been suggested to have peptidyltransferase activity; this is somewhat controversial. Makes several contacts with the 16S rRNA in the 70S ribosome. In Nostoc punctiforme (strain ATCC 29133 / PCC 73102), this protein is Large ribosomal subunit protein uL2.